The primary structure comprises 117 residues: Large ribosomal subunit protein uL22 (117 aa).

The protein belongs to the universal ribosomal protein uL22 family. Part of the 50S ribosomal subunit.

Its function is as follows. This protein binds specifically to 23S rRNA; its binding is stimulated by other ribosomal proteins, e.g. L4, L17, and L20. It is important during the early stages of 50S assembly. It makes multiple contacts with different domains of the 23S rRNA in the assembled 50S subunit and ribosome. The globular domain of the protein is located near the polypeptide exit tunnel on the outside of the subunit, while an extended beta-hairpin is found that lines the wall of the exit tunnel in the center of the 70S ribosome. This chain is Large ribosomal subunit protein uL22, found in Lactobacillus helveticus (strain DPC 4571).